Consider the following 248-residue polypeptide: Pathogenesis-related thaumatin-like protein 3.4 (248 aa).

The signal sequence occupies residues Met-1–Gly-25. Intrachain disulfides connect Cys-34–Cys-227, Cys-75–Cys-85, Cys-90–Cys-96, Cys-141–Cys-216, Cys-146–Cys-199, Cys-154–Cys-164, Cys-168–Cys-177, and Cys-178–Cys-186. Residue Asn-235 is glycosylated (N-linked (GlcNAc...) asparagine).

This sequence belongs to the thaumatin family. Mainly expressed in male and female strobili, and, at lower levels, in roots of seedlings and saplings.

May be involved in disease resistance. In Cryptomeria japonica (Japanese cedar), this protein is Pathogenesis-related thaumatin-like protein 3.4.